Here is a 205-residue protein sequence, read N- to C-terminus: Imidazoleglycerol-phosphate dehydratase (205 aa).

Belongs to the imidazoleglycerol-phosphate dehydratase family.

The protein resides in the cytoplasm. The enzyme catalyses D-erythro-1-(imidazol-4-yl)glycerol 3-phosphate = 3-(imidazol-4-yl)-2-oxopropyl phosphate + H2O. The protein operates within amino-acid biosynthesis; L-histidine biosynthesis; L-histidine from 5-phospho-alpha-D-ribose 1-diphosphate: step 6/9. This is Imidazoleglycerol-phosphate dehydratase from Chloroflexus aurantiacus (strain ATCC 29366 / DSM 635 / J-10-fl).